The chain runs to 48 residues: Large ribosomal subunit protein eL40 (48 aa).

Belongs to the eukaryotic ribosomal protein eL40 family.

In Methanocella arvoryzae (strain DSM 22066 / NBRC 105507 / MRE50), this protein is Large ribosomal subunit protein eL40.